The primary structure comprises 149 residues: Nucleoside diphosphate kinase 1 (149 aa).

Residues K9, F57, R85, T91, R102, and N112 each contribute to the ATP site. Catalysis depends on H115, which acts as the Pros-phosphohistidine intermediate.

As to quaternary structure, homohexamer. Requires Mg(2+) as cofactor.

It catalyses the reaction a 2'-deoxyribonucleoside 5'-diphosphate + ATP = a 2'-deoxyribonucleoside 5'-triphosphate + ADP. The catalysed reaction is a ribonucleoside 5'-diphosphate + ATP = a ribonucleoside 5'-triphosphate + ADP. Functionally, major role in the synthesis of nucleoside triphosphates other than ATP. The ATP gamma phosphate is transferred to the NDP beta phosphate via a ping-pong mechanism, using a phosphorylated active-site intermediate. This NDK is microtubule-associated. The protein is Nucleoside diphosphate kinase 1 (NDKR) of Oryza sativa subsp. indica (Rice).